The chain runs to 167 residues: uncharacterized protein (167 aa).

Positions 115 to 167 are disordered; it reads SYRSQPQLGFKSTPPAHSSVFHHSVKAPKEDQAQEAASRPLTSQDGWNPNIKK.

This is an uncharacterized protein from Homo sapiens (Human).